The sequence spans 84 residues: Cytochrome b559 subunit alpha (84 aa).

Residues 21–35 (VIHSITIPSLFIAGW) traverse the membrane as a helical segment. H23 contributes to the heme binding site.

The protein belongs to the PsbE/PsbF family. In terms of assembly, heterodimer of an alpha subunit and a beta subunit. PSII is composed of 1 copy each of membrane proteins PsbA, PsbB, PsbC, PsbD, PsbE, PsbF, PsbH, PsbI, PsbJ, PsbK, PsbL, PsbM, PsbT, PsbX, PsbY, PsbZ, Psb30/Ycf12, at least 3 peripheral proteins of the oxygen-evolving complex and a large number of cofactors. It forms dimeric complexes. The cofactor is heme b.

The protein resides in the plastid membrane. This b-type cytochrome is tightly associated with the reaction center of photosystem II (PSII). PSII is a light-driven water:plastoquinone oxidoreductase that uses light energy to abstract electrons from H(2)O, generating O(2) and a proton gradient subsequently used for ATP formation. It consists of a core antenna complex that captures photons, and an electron transfer chain that converts photonic excitation into a charge separation. The chain is Cytochrome b559 subunit alpha from Cuscuta gronovii (Common dodder).